Reading from the N-terminus, the 340-residue chain is MDENKIIDQLFSKEYTPQDDSEQAKNGDVSLYGLLDEVANGRRLMNCLFHSPMQMGNKLSTDKLDGKCRQIQRDWIDEEKTITMNSGALQLDGPVLFSWSHNVAPTSHQETINTTFKQGSPSRGSNKPKITTTSQLFDRASAEIDKCIKPNSKSWMVEERFERNEAHTADGKKPSTWANSDFKVDPLQKFVVKELPKEKKKSDGDKTKKNKSKRKSFFGFWGHSGSKSGSKKKSEKPIEAKNEIQDEVSQKSGLSPDDDTTFSDKNTIQSKQESMSDQQAEPKVHEPAVTNTGCSEHDDGDGFEQVPAQSSYHPSSEPSIASTPSLTLDSFIPLQPKKKI.

Basic and acidic residues predominate over residues 193 to 207 (KELPKEKKKSDGDKT). Residues 193–340 (KELPKEKKKS…FIPLQPKKKI (148 aa)) are disordered. Residues 217–228 (FFGFWGHSGSKS) are compositionally biased toward low complexity. Residues 235-244 (EKPIEAKNEI) show a composition bias toward basic and acidic residues. Composition is skewed to polar residues over residues 263–279 (SDKN…SDQQ) and 307–328 (PAQS…SLTL).

This is an uncharacterized protein from Saccharomyces cerevisiae (strain ATCC 204508 / S288c) (Baker's yeast).